A 482-amino-acid polypeptide reads, in one-letter code: Guanine nucleotide exchange factor SRM1 (482 aa).

A compositionally biased stretch (polar residues) spans 1–11; sequence MVKRTVATNGD. The tract at residues 1–22 is disordered; the sequence is MVKRTVATNGDASGAHRAKKMS. A Nuclear localization signal motif is present at residues 15-26; the sequence is AHRAKKMSKTHA. RCC1 repeat units lie at residues 45–101, 103–152, 183–238, 239–291, 292–347, 349–411, and 412–466; these read PLDI…ALDE, SNVW…TPAK, NGEV…FLDE, EGMV…ALTK, DNKL…ILSQ, GDLY…AVAQ, and NGIA…SGGV. A disordered region spans residues 128–158; sequence KDMDADDSSDDEDGDLNELESTPAKIPRESF. Acidic residues predominate over residues 131-145; that stretch reads DADDSSDDEDGDLNE. Phosphoserine is present on residues S135 and S136.

As to quaternary structure, component of a multicomponent complex composed of six to seven proteins, which has a collective molecular mass greater than 150 kDa. Interacts with GSP1 and YRB2. In terms of processing, phosphorylated; possibly by KSP1.

It is found in the nucleus. Its function is as follows. Guanine nucleotide exchange factor that promotes the exchange of GSP1/GSP2-bound GDP by GTP and controls RNA metabolism and transport. Involved in yeast pheromone response pathway and in mRNA metabolism. Involved in nuclear pore complex (NPC) assembly and required for mRNA and ribosome nuclear export. Binds chromatin and is involved NPC-mediated transcriptional control. The polypeptide is Guanine nucleotide exchange factor SRM1 (SRM1) (Saccharomyces cerevisiae (strain ATCC 204508 / S288c) (Baker's yeast)).